A 391-amino-acid chain; its full sequence is NAD(P)H-quinone oxidoreductase subunit H, chloroplastic (391 aa).

The protein belongs to the complex I 49 kDa subunit family. In terms of assembly, NDH is composed of at least 16 different subunits, 5 of which are encoded in the nucleus.

It localises to the plastid. The protein localises to the chloroplast thylakoid membrane. The catalysed reaction is a plastoquinone + NADH + (n+1) H(+)(in) = a plastoquinol + NAD(+) + n H(+)(out). The enzyme catalyses a plastoquinone + NADPH + (n+1) H(+)(in) = a plastoquinol + NADP(+) + n H(+)(out). Functionally, NDH shuttles electrons from NAD(P)H:plastoquinone, via FMN and iron-sulfur (Fe-S) centers, to quinones in the photosynthetic chain and possibly in a chloroplast respiratory chain. The immediate electron acceptor for the enzyme in this species is believed to be plastoquinone. Couples the redox reaction to proton translocation, and thus conserves the redox energy in a proton gradient. The chain is NAD(P)H-quinone oxidoreductase subunit H, chloroplastic from Nephroselmis olivacea (Green alga).